Reading from the N-terminus, the 182-residue chain is Orotate phosphoribosyltransferase (182 aa).

Residues R93, K94, K97, and E119–S127 each bind 5-phospho-alpha-D-ribose 1-diphosphate. Residues T123 and R151 each contribute to the orotate site.

The protein belongs to the purine/pyrimidine phosphoribosyltransferase family. PyrE subfamily. In terms of assembly, homodimer. Requires Mg(2+) as cofactor.

The enzyme catalyses orotidine 5'-phosphate + diphosphate = orotate + 5-phospho-alpha-D-ribose 1-diphosphate. The protein operates within pyrimidine metabolism; UMP biosynthesis via de novo pathway; UMP from orotate: step 1/2. Its function is as follows. Catalyzes the transfer of a ribosyl phosphate group from 5-phosphoribose 1-diphosphate to orotate, leading to the formation of orotidine monophosphate (OMP). In Haloquadratum walsbyi (strain DSM 16790 / HBSQ001), this protein is Orotate phosphoribosyltransferase.